We begin with the raw amino-acid sequence, 89 residues long: Small ribosomal subunit protein uS15 (89 aa).

This sequence belongs to the universal ribosomal protein uS15 family. As to quaternary structure, part of the 30S ribosomal subunit. Forms a bridge to the 50S subunit in the 70S ribosome, contacting the 23S rRNA.

Functionally, one of the primary rRNA binding proteins, it binds directly to 16S rRNA where it helps nucleate assembly of the platform of the 30S subunit by binding and bridging several RNA helices of the 16S rRNA. Its function is as follows. Forms an intersubunit bridge (bridge B4) with the 23S rRNA of the 50S subunit in the ribosome. This Shewanella baltica (strain OS185) protein is Small ribosomal subunit protein uS15.